The chain runs to 259 residues: 5'-nucleotidase SurE (259 aa).

A divalent metal cation is bound by residues aspartate 8, aspartate 9, serine 40, and asparagine 92.

Belongs to the SurE nucleotidase family. Requires a divalent metal cation as cofactor.

Its subcellular location is the cytoplasm. The enzyme catalyses a ribonucleoside 5'-phosphate + H2O = a ribonucleoside + phosphate. Its function is as follows. Nucleotidase that shows phosphatase activity on nucleoside 5'-monophosphates. This is 5'-nucleotidase SurE from Xanthomonas euvesicatoria pv. vesicatoria (strain 85-10) (Xanthomonas campestris pv. vesicatoria).